The chain runs to 267 residues: 2-dehydro-3-deoxyphosphooctonate aldolase (267 aa).

It belongs to the KdsA family.

It is found in the cytoplasm. It carries out the reaction D-arabinose 5-phosphate + phosphoenolpyruvate + H2O = 3-deoxy-alpha-D-manno-2-octulosonate-8-phosphate + phosphate. It participates in carbohydrate biosynthesis; 3-deoxy-D-manno-octulosonate biosynthesis; 3-deoxy-D-manno-octulosonate from D-ribulose 5-phosphate: step 2/3. The protein operates within bacterial outer membrane biogenesis; lipopolysaccharide biosynthesis. The sequence is that of 2-dehydro-3-deoxyphosphooctonate aldolase from Campylobacter jejuni subsp. doylei (strain ATCC BAA-1458 / RM4099 / 269.97).